Reading from the N-terminus, the 327-residue chain is Beta-ketoacyl-[acyl-carrier-protein] synthase III 2 (327 aa).

Residues Cys114 and His251 contribute to the active site. The tract at residues 252 to 256 is ACP-binding; that stretch reads SANLR. The active site involves Asn281.

The protein belongs to the thiolase-like superfamily. FabH family. In terms of assembly, homodimer.

The protein localises to the cytoplasm. It carries out the reaction malonyl-[ACP] + acetyl-CoA + H(+) = 3-oxobutanoyl-[ACP] + CO2 + CoA. It functions in the pathway lipid metabolism; fatty acid biosynthesis. In terms of biological role, catalyzes the condensation reaction of fatty acid synthesis by the addition to an acyl acceptor of two carbons from malonyl-ACP. Catalyzes the first condensation reaction which initiates fatty acid synthesis and may therefore play a role in governing the total rate of fatty acid production. Possesses both acetoacetyl-ACP synthase and acetyl transacylase activities. Its substrate specificity determines the biosynthesis of branched-chain and/or straight-chain of fatty acids. This Bacillus anthracis protein is Beta-ketoacyl-[acyl-carrier-protein] synthase III 2.